The following is a 652-amino-acid chain: MNKRMNELVALLNRYATEYYTSDNPSVADSEYDRLYRELVELETAYPEQVLADSPTHRVGGKVLDGFEKYSHQYPLYSLQDAFSREELDAFDARVRKEVAHPTYICELKIDGLSISLTYEKGILVAGVTRGDGSIGENITENLKRVKDIPLTLPEELDITVRGECYMPRASFDQVNQVRQENGEPEFANPRNAAAGTLRQLDTAVVAKRNLATFLYQEASPSTRDSQEKGLKYLEQLGFVVNPKRILAENIDEIWNFIQEVGQERENLPYDIDGVVIKVNDLASQEELGFTVKAPKWAVAYKFPAEEKEAQLLSVDWTVGRTGVVTPTANLTPVQLAGTTVSRATLHNVDYIAEKDIRKDDTVIVYKAGDIIPAVLRVVESKRVSEEKLDIPTNCPSCNSDLLHFEDEVALRCINPRCPAQIMEGLIHFASRDAMNITGLGPSIVEKLFAANLVKDVADIYRLQEEDFLLLEGVKEKSAAKLYQAIQASKENSAEKLLFGLGIRHVGSKVSQLLLQYFHSIENLSQADSEEVASIESLGGVIAKSLQTYFATEGSEILLRELKETGVNLDYKGQTVVADAALSGLTVVLTGKLERLKRSEAKSKLESLGAKVTGSISKKTDLVVVGADAGSKLQKAQELGIQVRDEAWLESL.

Residues 29-33 (DSEYD), 78-79 (SL), and glutamate 107 contribute to the NAD(+) site. The active-site N6-AMP-lysine intermediate is the lysine 109. NAD(+) is bound by residues arginine 130, glutamate 164, lysine 278, and lysine 302. Zn(2+) is bound by residues cysteine 395, cysteine 398, cysteine 413, and cysteine 418. Positions 577–652 (VADAALSGLT…VRDEAWLESL (76 aa)) constitute a BRCT domain.

The protein belongs to the NAD-dependent DNA ligase family. LigA subfamily. Requires Mg(2+) as cofactor. It depends on Mn(2+) as a cofactor.

The catalysed reaction is NAD(+) + (deoxyribonucleotide)n-3'-hydroxyl + 5'-phospho-(deoxyribonucleotide)m = (deoxyribonucleotide)n+m + AMP + beta-nicotinamide D-nucleotide.. Its function is as follows. DNA ligase that catalyzes the formation of phosphodiester linkages between 5'-phosphoryl and 3'-hydroxyl groups in double-stranded DNA using NAD as a coenzyme and as the energy source for the reaction. It is essential for DNA replication and repair of damaged DNA. This is DNA ligase from Streptococcus pneumoniae (strain JJA).